The primary structure comprises 337 residues: Acetyl-coenzyme A synthetase (337 aa).

CoA is bound by residues 131–134 (RGGR), Thr249, and Asn273. Residue 325–327 (GEP) coordinates ATP.

The protein belongs to the ATP-dependent AMP-binding enzyme family. It depends on Mg(2+) as a cofactor. Acetylated. Deacetylation by the SIR2-homolog deacetylase activates the enzyme.

It carries out the reaction acetate + ATP + CoA = acetyl-CoA + AMP + diphosphate. In terms of biological role, catalyzes the conversion of acetate into acetyl-CoA (AcCoA), an essential intermediate at the junction of anabolic and catabolic pathways. AcsA undergoes a two-step reaction. In the first half reaction, AcsA combines acetate with ATP to form acetyl-adenylate (AcAMP) intermediate. In the second half reaction, it can then transfer the acetyl group from AcAMP to the sulfhydryl group of CoA, forming the product AcCoA. The protein is Acetyl-coenzyme A synthetase (acsA) of Nostoc linckia.